A 124-amino-acid polypeptide reads, in one-letter code: MAQIPPSLQDMVNRFNQAQAQLQSVLLRKQQYEAELKEVDKAISEIEKLSPDAKIFKNVGNFLVPQTRDAALQELKERKELLELHVKTLSRQETMLREQLDKLRDEINKELARLKGGEAAKGGG.

Belongs to the prefoldin subunit beta family. As to quaternary structure, heterohexamer of two alpha and four beta subunits.

Its subcellular location is the cytoplasm. Functionally, molecular chaperone capable of stabilizing a range of proteins. Seems to fulfill an ATP-independent, HSP70-like function in archaeal de novo protein folding. The sequence is that of Prefoldin subunit beta from Pyrobaculum arsenaticum (strain DSM 13514 / JCM 11321 / PZ6).